The following is an 895-amino-acid chain: Microsomal triglyceride transfer protein large subunit (895 aa).

The N-terminal stretch at 1–18 (MILLAVLFLCFFSSYSAS) is a signal peptide. The Vitellogenin domain maps to 28–659 (LNNERLYKLT…VFQYLGKAGL (632 aa)). An intrachain disulfide couples cysteine 174 to cysteine 194.

In terms of assembly, heterodimer; heterodimerizes with the protein disulfide isomerase (P4HB/PDI). Interacts with APOB. Interacts with PRAP1.

The protein localises to the endoplasmic reticulum. The protein resides in the golgi apparatus. The enzyme catalyses a 1,2-diacyl-sn-glycero-3-phosphocholine(in) = a 1,2-diacyl-sn-glycero-3-phosphocholine(out). It catalyses the reaction a 1,2-diacyl-sn-glycero-3-phosphoethanolamine(in) = a 1,2-diacyl-sn-glycero-3-phosphoethanolamine(out). It carries out the reaction a cholesterol ester(in) = a cholesterol ester(out). The catalysed reaction is a triacyl-sn-glycerol(in) = a triacyl-sn-glycerol(out). Its function is as follows. Catalyzes the transport of triglyceride, cholesteryl ester, and phospholipid between phospholipid surfaces. Required for the assembly and secretion of plasma lipoproteins that contain apolipoprotein B. May be involved in regulating cholesteryl ester biosynthesis in cells that produce lipoproteins. This chain is Microsomal triglyceride transfer protein large subunit (MTTP), found in Mesocricetus auratus (Golden hamster).